Here is a 470-residue protein sequence, read N- to C-terminus: Mitogen-activated protein kinase 15 (470 aa).

The Protein kinase domain occupies 13–306 (FDLQKRLGKG…VEQCLVHPYV (294 aa)). ATP-binding positions include 19–27 (LGKGAYGIV) and Lys42. Asp137 (proton acceptor) is an active-site residue. Phosphothreonine is present on Thr178. A TXY motif is present at residues 178 to 180 (TEY). Residue Tyr180 is modified to Phosphotyrosine. Residues 362–445 (PYGEDKSRAP…PSSIKQRRRS (84 aa)) are disordered. A compositionally biased stretch (low complexity) spans 394 to 406 (MDKNNSSSHDSSS). Over residues 409 to 426 (LRERAASAESRTSKDSNG) the composition is skewed to basic and acidic residues.

The protein belongs to the protein kinase superfamily. CMGC Ser/Thr protein kinase family. MAP kinase subfamily. Requires Mg(2+) as cofactor. Post-translationally, dually phosphorylated on Thr-178 and Tyr-180, which activates the enzyme. Expressed in the URX neuron and in many other head sensory neurons. Isoform a: Expressed in head and tail ciliated sensory neurons, and in mid-body neurons. Isoform c: Expressed in head and tail ciliated sensory neurons, and in mid-body neurons.

The protein localises to the cell projection. It is found in the cilium. It localises to the cilium membrane. Its subcellular location is the cytoplasm. The protein resides in the cytoskeleton. The protein localises to the cilium axoneme. It is found in the cilium basal body. It localises to the cell junction. Its subcellular location is the perikaryon. The protein resides in the dendrite. The enzyme catalyses L-seryl-[protein] + ATP = O-phospho-L-seryl-[protein] + ADP + H(+). It catalyses the reaction L-threonyl-[protein] + ATP = O-phospho-L-threonyl-[protein] + ADP + H(+). With respect to regulation, activated by threonine and tyrosine phosphorylation. Atypical MAPK protein. Regulates primary cilium formation in sensory neurons and the localization of ciliary proteins involved in cilium structure, transport, and signaling. Acts in dopamine (DA) neurons to support synaptic membrane dat-1 availability via activation of rho-1 thereby sustaining normal levels of DA clearance. Plays a role in male mating behavior, probably in part through regulating the localization of the polycystin pkd-2. Functions postembryonically in the URX sensory neurons to constrain URX dendrite growth throughout lifetime, probably by restricting expansion of the subcellular sensory compartment at the dendrite ending. This chain is Mitogen-activated protein kinase 15, found in Caenorhabditis elegans.